We begin with the raw amino-acid sequence, 527 residues long: UDP-glucuronosyltransferase 2A3 (527 aa).

An N-terminal signal peptide occupies residues 1-23; sequence MRSEKSALVFLLLQLFCVGCGFC. Topologically, residues 24–486 are extracellular; it reads GKVLVWPCDM…AAHNLTWFQH (463 aa). The N-linked (GlcNAc...) asparagine glycan is linked to Asn313. A helical transmembrane segment spans residues 487–507; it reads YSIDVIGFLLACVATAIFLFT. Over 508-523 the chain is Cytoplasmic; sequence KCCLFSCQKFNKTRKI.

This sequence belongs to the UDP-glycosyltransferase family.

The protein localises to the membrane. The enzyme catalyses glucuronate acceptor + UDP-alpha-D-glucuronate = acceptor beta-D-glucuronoside + UDP + H(+). In terms of biological role, UDP-glucuronosyltransferases catalyze phase II biotransformation reactions in which lipophilic substrates are conjugated with glucuronic acid to increase water solubility and enhance excretion. They are of major importance in the conjugation and subsequent elimination of potentially toxic xenobiotics and endogenous compounds. The sequence is that of UDP-glucuronosyltransferase 2A3 (UGT2A3) from Pongo abelii (Sumatran orangutan).